Consider the following 273-residue polypeptide: Large ribosomal subunit protein uL2 (273 aa).

A disordered region spans residues arginine 221 to threonine 263. The segment covering lysine 253 to threonine 263 has biased composition (basic residues).

Belongs to the universal ribosomal protein uL2 family. Part of the 50S ribosomal subunit. Forms a bridge to the 30S subunit in the 70S ribosome.

Functionally, one of the primary rRNA binding proteins. Required for association of the 30S and 50S subunits to form the 70S ribosome, for tRNA binding and peptide bond formation. It has been suggested to have peptidyltransferase activity; this is somewhat controversial. Makes several contacts with the 16S rRNA in the 70S ribosome. This Buchnera aphidicola subsp. Baizongia pistaciae (strain Bp) protein is Large ribosomal subunit protein uL2.